We begin with the raw amino-acid sequence, 193 residues long: Interferon lambda-3 (193 aa).

An N-terminal signal peptide occupies residues 1-19 (MLLLLLPLLLAAVLTRTQA). Intrachain disulfides connect C35-C132, C69-C166, and C185-C192.

Belongs to the lambda interferon family.

The protein resides in the secreted. Functionally, cytokine with antiviral, antitumour and immunomodulatory activities. Plays a critical role in the antiviral host defense, predominantly in the epithelial tissues. Acts as a ligand for the heterodimeric class II cytokine receptor composed of IL10RB and IFNLR1, and receptor engagement leads to the activation of the JAK/STAT signaling pathway resulting in the expression of IFN-stimulated genes (ISG), which mediate the antiviral state. Has a restricted receptor distribution and therefore restricted targets: is primarily active in epithelial cells and this cell type-selective action is because of the epithelial cell-specific expression of its receptor IFNLR1. Seems not to be essential for early virus-activated host defense in vaginal infection, but plays an important role in Toll-like receptor (TLR)-induced antiviral defense. Plays a significant role in the antiviral immune defense in the intestinal epithelium. Exerts an immunomodulatory effect by up-regulating MHC class I antigen expression. In Mus musculus (Mouse), this protein is Interferon lambda-3 (Ifnl3).